The following is a 429-amino-acid chain: Trigger factor (429 aa).

In terms of domain architecture, PPIase FKBP-type spans 161–246 (EDRVTIDFTG…LKKVEERELP (86 aa)).

Belongs to the FKBP-type PPIase family. Tig subfamily. Homodimer and monomer. In vivo most of the ribosomes are in complex with monomeric TF. Uncomplexed TF, however, is in a monomer-dimer equilibrium with approximately two thirds of TF existing in a dimeric state.

Its subcellular location is the cytoplasm. The catalysed reaction is [protein]-peptidylproline (omega=180) = [protein]-peptidylproline (omega=0). In terms of biological role, involved in protein export. Acts as a chaperone by maintaining the newly synthesized protein in an open conformation. Functions as a peptidyl-prolyl cis-trans isomerase. This is Trigger factor from Escherichia coli O45:K1 (strain S88 / ExPEC).